We begin with the raw amino-acid sequence, 187 residues long: Sliding-clamp-loader small subunit (187 aa).

It belongs to the Tevenvirinae sliding-clamp-loader small subunit family. As to quaternary structure, the sliding-clamp-loader consists of 4 large subunits and 1 small subunit. Interacts with the sliding clamp; this interaction allows the sliding-clamp-loader to open the sliding clamp. Part of the replicase complex that includes the DNA polymerase, the polymerase clamp, the clamp loader complex, the single-stranded DNA binding protein, the primase, the helicase and the helicase assembly factor.

Forms the sliding-clamp-loader together with the small subunit. The clamp loader holds the clamp in an open conformation and places it onto the DNA. The chain is Sliding-clamp-loader small subunit (62) from Escherichia coli (Bacteriophage T4).